Here is a 310-residue protein sequence, read N- to C-terminus: Acetyl-coenzyme A carboxylase carboxyl transferase subunit alpha (310 aa).

Residues 36–286 enclose the CoA carboxyltransferase C-terminal domain; that stretch reads NLEKEITKTY…GEYILKQLDE (251 aa).

This sequence belongs to the AccA family. In terms of assembly, acetyl-CoA carboxylase is a heterohexamer composed of biotin carboxyl carrier protein (AccB), biotin carboxylase (AccC) and two subunits each of ACCase subunit alpha (AccA) and ACCase subunit beta (AccD).

The protein localises to the cytoplasm. The enzyme catalyses N(6)-carboxybiotinyl-L-lysyl-[protein] + acetyl-CoA = N(6)-biotinyl-L-lysyl-[protein] + malonyl-CoA. The protein operates within lipid metabolism; malonyl-CoA biosynthesis; malonyl-CoA from acetyl-CoA: step 1/1. Its function is as follows. Component of the acetyl coenzyme A carboxylase (ACC) complex. First, biotin carboxylase catalyzes the carboxylation of biotin on its carrier protein (BCCP) and then the CO(2) group is transferred by the carboxyltransferase to acetyl-CoA to form malonyl-CoA. The protein is Acetyl-coenzyme A carboxylase carboxyl transferase subunit alpha of Campylobacter fetus subsp. fetus (strain 82-40).